Consider the following 1048-residue polypeptide: Histone deacetylase complex subunit SAP130 (1048 aa).

A disordered region spans residues 1 to 95; the sequence is MGPPRHPQAG…LQSREEKQEP (95 aa). The span at 40–54 shows a compositional bias: polar residues; the sequence is TGLSQAPSQIANSGS. Basic and acidic residues predominate over residues 67 to 80; that stretch reads ESGRDSEVSAREHM. Arg232 is subject to Omega-N-methylarginine. A Phosphothreonine modification is found at Thr355. Phosphoserine occurs at positions 442 and 465. Disordered regions lie at residues 458-477, 576-617, and 649-687; these read PISG…RSDN, IGTP…PEGK, and QTHS…SEIH. 2 stretches are compositionally biased toward polar residues: residues 590–613 and 649–667; these read GIHS…QQPQ and QTHS…SSPR. Lys785 participates in a covalent cross-link: Glycyl lysine isopeptide (Lys-Gly) (interchain with G-Cter in SUMO2). Positions 819 to 871 are disordered; that stretch reads LSMPTSDLPPGASPRKKPRKQQHVISTEEGDMMETNSTDDEKSTAKSLLVKAE. The tract at residues 836–1047 is interactions with SIN3A and HDAC1; that stretch reads PRKQQHVIST…KVSKLKRKEK (212 aa). A Phosphoserine modification is found at Ser855. Thr856 carries the post-translational modification Phosphothreonine. Residues Lys864 and Lys869 each participate in a glycyl lysine isopeptide (Lys-Gly) (interchain with G-Cter in SUMO2) cross-link. Phosphoserine is present on Ser875.

Belongs to the SAP130 family. In terms of assembly, component of a mSin3A corepressor complex that contains SIN3A, SAP130, SUDS3/SAP45, ARID4B/SAP180, HDAC1 and HDAC2. Interacts (released by dead or dying cells) with CLEC4E. In terms of processing, acetylated. Sumoylated with SUMO1. As to expression, expressed in various cancer cell ines.

The protein resides in the nucleus. Functionally, acts as a transcriptional repressor. May function in the assembly and/or enzymatic activity of the mSin3A corepressor complex or in mediating interactions between the complex and other regulatory complexes. The chain is Histone deacetylase complex subunit SAP130 (SAP130) from Homo sapiens (Human).